A 353-amino-acid chain; its full sequence is Photosystem II D2 protein (353 aa).

Position 2 is an N-acetylthreonine (T2). The residue at position 2 (T2) is a Phosphothreonine. Residues 41 to 61 form a helical membrane-spanning segment; that stretch reads CAYFALGGWFTGTTFVTSWYT. H118 provides a ligand contact to chlorophyll a. The helical transmembrane segment at 125-141 threads the bilayer; it reads GFMLRQFELARSVQLRP. Q130 and N143 together coordinate pheophytin a. Residues 153 to 166 traverse the membrane as a helical segment; sequence VFVSVFLIYPLGQS. H198 provides a ligand contact to chlorophyll a. Residues 208-228 traverse the membrane as a helical segment; that stretch reads AALLCAIHGATVENTLFEDGD. H215 and F262 together coordinate a plastoquinone. H215 is a binding site for Fe cation. Fe cation is bound at residue H269. The chain crosses the membrane as a helical span at residues 279–295; it reads GLWMSALGVVGLALNLR.

It belongs to the reaction center PufL/M/PsbA/D family. In terms of assembly, PSII is composed of 1 copy each of membrane proteins PsbA, PsbB, PsbC, PsbD, PsbE, PsbF, PsbH, PsbI, PsbJ, PsbK, PsbL, PsbM, PsbT, PsbX, PsbY, PsbZ, Psb30/Ycf12, at least 3 peripheral proteins of the oxygen-evolving complex and a large number of cofactors. It forms dimeric complexes. It depends on The D1/D2 heterodimer binds P680, chlorophylls that are the primary electron donor of PSII, and subsequent electron acceptors. It shares a non-heme iron and each subunit binds pheophytin, quinone, additional chlorophylls, carotenoids and lipids. There is also a Cl(-1) ion associated with D1 and D2, which is required for oxygen evolution. The PSII complex binds additional chlorophylls, carotenoids and specific lipids. as a cofactor.

The protein resides in the plastid. It localises to the chloroplast thylakoid membrane. It carries out the reaction 2 a plastoquinone + 4 hnu + 2 H2O = 2 a plastoquinol + O2. Its function is as follows. Photosystem II (PSII) is a light-driven water:plastoquinone oxidoreductase that uses light energy to abstract electrons from H(2)O, generating O(2) and a proton gradient subsequently used for ATP formation. It consists of a core antenna complex that captures photons, and an electron transfer chain that converts photonic excitation into a charge separation. The D1/D2 (PsbA/PsbD) reaction center heterodimer binds P680, the primary electron donor of PSII as well as several subsequent electron acceptors. D2 is needed for assembly of a stable PSII complex. The sequence is that of Photosystem II D2 protein from Spinacia oleracea (Spinach).